A 94-amino-acid polypeptide reads, in one-letter code: Large ribosomal subunit protein bL27 (94 aa).

Positions 1-9 (MLKLNLQFF) are excised as a propeptide. Positions 12–32 (KKGVSSTKNGRDSESKRLGAK) are disordered. Residues 20-32 (NGRDSESKRLGAK) show a composition bias toward basic and acidic residues.

This sequence belongs to the bacterial ribosomal protein bL27 family. The N-terminus is cleaved by ribosomal processing cysteine protease Prp.

The protein is Large ribosomal subunit protein bL27 of Staphylococcus carnosus (strain TM300).